Reading from the N-terminus, the 586-residue chain is uncharacterized protein (586 aa).

Coiled-coil stretches lie at residues 183-293 (THTE…ELEN) and 331-400 (FKDK…DKKN).

This is an uncharacterized protein from Bacillus subtilis (strain 168).